The following is a 439-amino-acid chain: Serine hydroxymethyltransferase (439 aa).

Positions 1–20 (MNAPHRDETTASHRDDGFFT) are disordered. (6S)-5,6,7,8-tetrahydrofolate is bound by residues Leu-136 and 140–142 (GHL). Lys-245 carries the N6-(pyridoxal phosphate)lysine modification.

It belongs to the SHMT family. In terms of assembly, homodimer. Pyridoxal 5'-phosphate serves as cofactor.

It localises to the cytoplasm. It carries out the reaction (6R)-5,10-methylene-5,6,7,8-tetrahydrofolate + glycine + H2O = (6S)-5,6,7,8-tetrahydrofolate + L-serine. It functions in the pathway one-carbon metabolism; tetrahydrofolate interconversion. The protein operates within amino-acid biosynthesis; glycine biosynthesis; glycine from L-serine: step 1/1. Catalyzes the reversible interconversion of serine and glycine with tetrahydrofolate (THF) serving as the one-carbon carrier. This reaction serves as the major source of one-carbon groups required for the biosynthesis of purines, thymidylate, methionine, and other important biomolecules. Also exhibits THF-independent aldolase activity toward beta-hydroxyamino acids, producing glycine and aldehydes, via a retro-aldol mechanism. The chain is Serine hydroxymethyltransferase from Jannaschia sp. (strain CCS1).